The primary structure comprises 150 residues: Ribosome maturation factor RimP (150 aa).

This sequence belongs to the RimP family.

It localises to the cytoplasm. Functionally, required for maturation of 30S ribosomal subunits. In Francisella tularensis subsp. mediasiatica (strain FSC147), this protein is Ribosome maturation factor RimP.